Reading from the N-terminus, the 283-residue chain is 4-hydroxy-tetrahydrodipicolinate reductase (283 aa).

NAD(+)-binding positions include 15-20 (GALGRM) and 116-118 (GTT). His-172 functions as the Proton donor/acceptor in the catalytic mechanism. His-173 is a (S)-2,3,4,5-tetrahydrodipicolinate binding site. The active-site Proton donor is Lys-176. 182 to 183 (GT) contributes to the (S)-2,3,4,5-tetrahydrodipicolinate binding site.

The protein belongs to the DapB family.

It is found in the cytoplasm. It catalyses the reaction (S)-2,3,4,5-tetrahydrodipicolinate + NAD(+) + H2O = (2S,4S)-4-hydroxy-2,3,4,5-tetrahydrodipicolinate + NADH + H(+). The enzyme catalyses (S)-2,3,4,5-tetrahydrodipicolinate + NADP(+) + H2O = (2S,4S)-4-hydroxy-2,3,4,5-tetrahydrodipicolinate + NADPH + H(+). It functions in the pathway amino-acid biosynthesis; L-lysine biosynthesis via DAP pathway; (S)-tetrahydrodipicolinate from L-aspartate: step 4/4. In terms of biological role, catalyzes the conversion of 4-hydroxy-tetrahydrodipicolinate (HTPA) to tetrahydrodipicolinate. In Prochlorococcus marinus (strain MIT 9313), this protein is 4-hydroxy-tetrahydrodipicolinate reductase.